The chain runs to 354 residues: GTPase Obg (354 aa).

In terms of domain architecture, Obg spans Met1–Leu159. The 174-residue stretch at Ala160 to Phe333 folds into the OBG-type G domain. GTP is bound by residues Gly166 to Ser173, Phe191 to Thr195, Asp212 to Gly215, Thr283 to Asp286, and Ser314 to Val316. Mg(2+) contacts are provided by Ser173 and Thr193.

It belongs to the TRAFAC class OBG-HflX-like GTPase superfamily. OBG GTPase family. In terms of assembly, monomer. The cofactor is Mg(2+).

Its subcellular location is the cytoplasm. An essential GTPase which binds GTP, GDP and possibly (p)ppGpp with moderate affinity, with high nucleotide exchange rates and a fairly low GTP hydrolysis rate. Plays a role in control of the cell cycle, stress response, ribosome biogenesis and in those bacteria that undergo differentiation, in morphogenesis control. The polypeptide is GTPase Obg (Anaeromyxobacter dehalogenans (strain 2CP-1 / ATCC BAA-258)).